We begin with the raw amino-acid sequence, 144 residues long: UPF0299 membrane protein MS1271 (144 aa).

4 helical membrane passes run 5–25, 28–48, 57–77, and 92–112; these read IFLF…GEGI, LIPI…IGLT, VFFG…PVSV, and SLLI…GFLG.

This sequence belongs to the UPF0299 family.

The protein resides in the cell inner membrane. This Mannheimia succiniciproducens (strain KCTC 0769BP / MBEL55E) protein is UPF0299 membrane protein MS1271.